A 1339-amino-acid polypeptide reads, in one-letter code: Astrotactin-2 (1339 aa).

Residues methionine 1–alanine 49 form the signal peptide. The Lumenal segment spans residues glycine 50–histidine 206. N-linked (GlcNAc...) asparagine glycosylation is present at asparagine 168. The helical transmembrane segment at isoleucine 207–leucine 227 threads the bilayer. Residues tyrosine 228–lysine 434 are Cytoplasmic-facing. 2 disordered regions span residues glutamate 296–serine 316 and threonine 363–glutamate 408. The helical transmembrane segment at threonine 435–methionine 455 threads the bilayer. Residues serine 456 to arginine 1339 lie on the Lumenal side of the membrane. EGF-like domains lie at valine 510–valine 550, proline 651–tyrosine 695, and lysine 699–leucine 751. 9 disulfide bridges follow: cysteine 514–cysteine 526, cysteine 522–cysteine 533, cysteine 535–cysteine 549, cysteine 655–cysteine 668, cysteine 662–cysteine 679, cysteine 681–cysteine 694, cysteine 703–cysteine 715, cysteine 711–cysteine 735, and cysteine 737–cysteine 750. 2 N-linked (GlcNAc...) asparagine glycosylation sites follow: asparagine 770 and asparagine 783. 3 disulfides stabilise this stretch: cysteine 825–cysteine 987, cysteine 916–cysteine 977, and cysteine 983–cysteine 990. N-linked (GlcNAc...) asparagine glycosylation is present at asparagine 1020. 5 disulfide bridges follow: cysteine 1036–cysteine 1047, cysteine 1049–cysteine 1062, cysteine 1136–cysteine 1158, cysteine 1190–cysteine 1277, and cysteine 1298–cysteine 1321. The Fibronectin type-III domain occupies leucine 1065–threonine 1188.

The protein belongs to the astrotactin family. As to quaternary structure, interacts with ASTN1; the interaction is not calcium-dependent.

The protein resides in the membrane. It localises to the perikaryon. Its subcellular location is the cytoplasm. The protein localises to the cell cortex. It is found in the early endosome. The protein resides in the late endosome. It localises to the cytoplasmic vesicle. Its subcellular location is the clathrin-coated vesicle. Its function is as follows. Mediates recycling of the neuronal cell adhesion molecule ASTN1 to the anterior pole of the cell membrane in migrating neurons. Promotes ASTN1 internalization and intracellular transport of endocytosed ASTN1. Selectively binds inositol-4,5-bisphosphate, inositol-3,4,5-trisphosphate and inositol-1,3,4,5-tetrakisphosphate, suggesting it is recruited to membranes that contain lipids with a phosphoinositide headgroup. The protein is Astrotactin-2 (ASTN2) of Homo sapiens (Human).